The chain runs to 757 residues: Filensin (757 aa).

The head stretch occupies residues 1–39 (MYRRSYVFQTRKEQYERAEEAPRAAEPDRLAEARAAAPN). Position 5 is a phosphoserine (serine 5). The IF rod domain maps to 39–319 (NLAALQGLGE…RIIENEGNRL (281 aa)). A coil 1A region spans residues 40–74 (LAALQGLGERVAAHVQRARALEQRHAVLRRQLDAF). Alanine 41 carries the N-acetylalanine modification. Residues 75 to 83 (QRLDELAGP) are linker 1. The segment at 84 to 183 (EDALARHVEG…RYKKNLLEIQ (100 aa)) is coil 1B. Positions 184–200 (TYVTILQQIIQTTPQAA) are linker 12. The segment at 201-319 (AITSGMREEK…RIIENEGNRL (119 aa)) is coil 2. Residues 320 to 756 (SSAFIETPIT…KKLGEKGSSS (437 aa)) form a tail region. Residues serine 340 and serine 419 each carry the phosphoserine modification. Disordered regions lie at residues 406–436 (EGESKLEPGDEEASPPTQEGAPEDVPDGGKI) and 493–705 (GVVV…PPRK). Glycine 433 is lipidated: N-myristoyl glycine. Over residues 493 to 512 (GVVVSKGDDSVPPDSGVEPS) the composition is skewed to low complexity. Serine 512 carries the phosphoserine modification. The span at 528–658 (QEKEDGLKEE…KQDDQKEEGA (131 aa)) shows a compositional bias: basic and acidic residues. The stretch at 532–545 (DGLKEEGGPPEGKG) is repeat 1. The 7 X 14 AA tandem repeats stretch occupies residues 532–622 (DGLKEEGGPP…EEEGPLQKKE (91 aa)). Residues 546 to 552 (EPPEGKG) form a 2; truncated repeat. 5 tandem repeats follow at residues 553 to 566 (DSVKEEGGPPEGKG), 567 to 580 (DGVKEEGGPPEGKG), 581 to 594 (DGVKEEGGPPEGKG), 595 to 608 (DGVKKEGEPPEGKG), and 609 to 622 (EGLKEEEGPLQKKE). Phosphothreonine occurs at positions 628 and 674. Phosphoserine occurs at positions 701, 754, and 755.

It belongs to the intermediate filament family. In terms of assembly, part of a complex required for lens intermediate filament formation composed of BFSP1, BFSP2 and CRYAA. Identified in a complex that contains VIM, EZR, AHNAK, BFSP1, BFSP2, ANK2, PLEC, PRX and spectrin. Found in a complex composed of PPL (via C-terminal linker domain), BFSP1 and BFSP2 in the retinal lens. Within the complex interacts with BFSP2. Interacts (via C-terminus) with MIP (via C-terminus) in aged lens fiber cells. Proteolytically cleaved during lens cell fiber differentiation with increased fragmentation as fiber cell age increases. In terms of processing, myristoylated at Gly-433 following proteolytic cleavage at Asp-432. Post-translationally, acetylated at Ala-41 following proteolytic cleavage at Leu-40. Abundantly expressed in both the inner and outer cortex of the retina, expressed at a lower level in the nucleus of the retina (at protein level). Detected in eye lens fiber cells (at protein level).

The protein localises to the cell membrane. The protein resides in the cytoplasm. Its subcellular location is the cytoskeleton. It is found in the cell cortex. In terms of biological role, required for the correct formation of lens intermediate filaments as part of a complex composed of BFSP1, BFSP2 and CRYAA. Involved in altering the calcium regulation of MIP water permeability. This Bos taurus (Bovine) protein is Filensin (BFSP1).